Consider the following 251-residue polypeptide: 1-(5-phosphoribosyl)-5-[(5-phosphoribosylamino)methylideneamino] imidazole-4-carboxamide isomerase (251 aa).

Catalysis depends on Asp8, which acts as the Proton acceptor. The active-site Proton donor is the Asp131.

The protein belongs to the HisA/HisF family.

It is found in the cytoplasm. It catalyses the reaction 1-(5-phospho-beta-D-ribosyl)-5-[(5-phospho-beta-D-ribosylamino)methylideneamino]imidazole-4-carboxamide = 5-[(5-phospho-1-deoxy-D-ribulos-1-ylimino)methylamino]-1-(5-phospho-beta-D-ribosyl)imidazole-4-carboxamide. It participates in amino-acid biosynthesis; L-histidine biosynthesis; L-histidine from 5-phospho-alpha-D-ribose 1-diphosphate: step 4/9. This chain is 1-(5-phosphoribosyl)-5-[(5-phosphoribosylamino)methylideneamino] imidazole-4-carboxamide isomerase, found in Azoarcus sp. (strain BH72).